The chain runs to 100 residues: Pancreatic trypsin inhibitor (100 aa).

The N-terminal stretch at 1-21 (MKMSRLCLSVALLVLLGTLAA) is a signal peptide. The propeptide occupies 22-35 (STPGCDTSNQAKAQ). The BPTI/Kunitz inhibitor domain maps to 40-90 (CLEPPYTGPCKARIIRYFYNAKAGLCQTFVYGGCRAKRNNFKSAEDCMRTC). Intrachain disulfides connect C40-C90, C49-C73, and C65-C86. The propeptide occupies 94-100 (IGPWENL).

Its subcellular location is the secreted. Inhibits trypsin, kallikrein, chymotrypsin, and plasmin. The sequence is that of Pancreatic trypsin inhibitor from Bos taurus (Bovine).